Reading from the N-terminus, the 217-residue chain is GTP cyclohydrolase 1 (217 aa).

The Zn(2+) site is built by cysteine 109, histidine 112, and cysteine 180.

This sequence belongs to the GTP cyclohydrolase I family. In terms of assembly, toroid-shaped homodecamer, composed of two pentamers of five dimers.

The catalysed reaction is GTP + H2O = 7,8-dihydroneopterin 3'-triphosphate + formate + H(+). It functions in the pathway cofactor biosynthesis; 7,8-dihydroneopterin triphosphate biosynthesis; 7,8-dihydroneopterin triphosphate from GTP: step 1/1. In Vibrio vulnificus (strain CMCP6), this protein is GTP cyclohydrolase 1.